Here is a 208-residue protein sequence, read N- to C-terminus: MTPACEARLDAGLAELGLEVDATARERLLALLALLHKWNRAYNLTAVRDPEQMVTRHLLDSASVATAVRGPRLLDVGAGAGLPGLVLAILDPSLEVTMLDGNGKKVRFQRQAVLELGLENVTPVQARVEHFTTRDFDQIVSRAFAQLATFVELTRPLLAEGGEWLAMKGRDAASELAELPPDVTLIERRDLEVPGDAAQRVLLRLRRA.

Residues Gly-77, Leu-82, 128–129 (VE), and Arg-142 each bind S-adenosyl-L-methionine.

This sequence belongs to the methyltransferase superfamily. RNA methyltransferase RsmG family.

The protein resides in the cytoplasm. It catalyses the reaction guanosine(527) in 16S rRNA + S-adenosyl-L-methionine = N(7)-methylguanosine(527) in 16S rRNA + S-adenosyl-L-homocysteine. Specifically methylates the N7 position of guanine in position 527 of 16S rRNA. This Chromohalobacter salexigens (strain ATCC BAA-138 / DSM 3043 / CIP 106854 / NCIMB 13768 / 1H11) protein is Ribosomal RNA small subunit methyltransferase G.